A 187-amino-acid chain; its full sequence is Elongation factor P (187 aa).

It belongs to the elongation factor P family.

The protein resides in the cytoplasm. It participates in protein biosynthesis; polypeptide chain elongation. Involved in peptide bond synthesis. Stimulates efficient translation and peptide-bond synthesis on native or reconstituted 70S ribosomes in vitro. Probably functions indirectly by altering the affinity of the ribosome for aminoacyl-tRNA, thus increasing their reactivity as acceptors for peptidyl transferase. This Mycolicibacterium smegmatis (strain ATCC 700084 / mc(2)155) (Mycobacterium smegmatis) protein is Elongation factor P.